The following is a 300-amino-acid chain: MTPKQSPNSETGAVTEPPLVLVTGPSGAGRTTAINVLEDLDFEAIDNLPLRLVPALVAAGGADRALVLGLDPRNRDFSTEAMVDMIDMLKARRGLKTTVLYLDADAEILLRRFSETRRRHPLSPAESPELGVSRELDLMQPVKERSDVVIDTSDLNVHQLRAEVERLFAPSGRRLAVSLHSFSYKRGIPRNVDMVFDCRFLSNPYWEPALRVHDGRDQEVQDYVMSDARFQGFFDRVLDLTLSLLPAYREEGKSHFSIAFGCTGGQHRSVTLAETLAKALAREGQQVSIRHRELPGQQLK.

ATP is bound at residue 24 to 31 (GPSGAGRT). 71–74 (DPRN) lines the GTP pocket.

This sequence belongs to the RapZ-like family.

Functionally, displays ATPase and GTPase activities. This is Nucleotide-binding protein TM1040_2438 from Ruegeria sp. (strain TM1040) (Silicibacter sp.).